Consider the following 1194-residue polypeptide: ATP-dependent RNA helicase DHX30 (1194 aa).

Positions 1–10 are enriched in basic and acidic residues; the sequence is MFSLDSFRKD. Residues 1 to 27 are disordered; that stretch reads MFSLDSFRKDRAQHRQRQCKLPPPRLP. Phosphoserine occurs at positions 6 and 15. Residues 53–121 enclose the DRBM domain; it reads PKNLLNSVIG…QAAAAACQLF (69 aa). Residues 150–199 form a disordered region; the sequence is ADSWWRPEPTMPPTSWRQLNPESIRPGGPGGLSRSLGREEEEDEEEELEE. The span at 188-199 shows a compositional bias: acidic residues; sequence EEEEDEEEELEE. A phosphoserine mark is found at serine 226 and serine 380. A Helicase ATP-binding domain is found at 444 to 612; it reads LNAIEQHPVV…FGGCPVIKVP (169 aa). Residue 457–464 coordinates ATP; that stretch reads GDTGCGKT. Positions 559–562 match the DEAH box motif; the sequence is DEVH. The 174-residue stretch at 654 to 827 folds into the Helicase C-terminal domain; that stretch reads LVTDLVLHID…NLVLQAKIHM (174 aa).

This sequence belongs to the DEAD box helicase family. DEAH subfamily. Identified in a complex with TFAM and SSBP1. Interacts with AGO1 and AGO2. Interacts (via N-terminus) with ZC3HAV1 (via N-terminal domain) in an RNA-independent manner. Found in a complex with GRSF1, DDX28, FASTKD2 and FASTKD5. Phosphorylated on Ser-15.

It localises to the cytoplasm. The protein localises to the mitochondrion. The protein resides in the mitochondrion matrix. It is found in the mitochondrion nucleoid. The enzyme catalyses ATP + H2O = ADP + phosphate + H(+). Its function is as follows. RNA-dependent helicase. Plays an important role in the assembly of the mitochondrial large ribosomal subunit. Required for optimal function of the zinc-finger antiviral protein ZC3HAV1. Associates with mitochondrial DNA. Involved in nervous system development and differentiation through its involvement in the up-regulation of a number of genes which are required for neurogenesis, including GSC, NCAM1, neurogenin, and NEUROD. The sequence is that of ATP-dependent RNA helicase DHX30 (DHX30) from Homo sapiens (Human).